The sequence spans 233 residues: MMTRGRKENSNETSPSPTLLLHGGVIDIPLNTDSGVTKNTPGEIALLRFKSVSKLWSSIISSRRDFIESIVTRFLTQPPHDAHFIFGFDSGPYVECFLGLSSTYPPNTDIEAVLSIPGRMAQYVYGLMCCLSGFKDAKKETQGWSRIFFHEMHGFSNWRILGATCGGEILFAKWMYCIYHYEDKLLCVLYYEPKRNSMRGVDVEGTLPNDTRRYRFVIIWTIPDHVQNTMYLY.

In terms of domain architecture, F-box spans 22–69 (HGGVIDIPLNTDSGVTKNTPGEIALLRFKSVSKLWSSIISSRRDFIES).

This chain is Probable F-box protein At3g56670, found in Arabidopsis thaliana (Mouse-ear cress).